The primary structure comprises 93 residues: Cell division protein FtsB (93 aa).

The Cytoplasmic portion of the chain corresponds to 1 to 3 (MRI). Residues 4-21 (FVIALTLLFGWLQYTLWF) traverse the membrane as a helical segment. Residues 22–93 (GKNGVSDYYT…FYRIVDEEEH (72 aa)) are Periplasmic-facing. Residues 31 to 75 (TVEDEIEVQQQVNSKLQARNNEMFAEIDDLRQGLDAIEERARHEL) adopt a coiled-coil conformation.

The protein belongs to the FtsB family. As to quaternary structure, part of a complex composed of FtsB, FtsL and FtsQ.

It is found in the cell inner membrane. Essential cell division protein. May link together the upstream cell division proteins, which are predominantly cytoplasmic, with the downstream cell division proteins, which are predominantly periplasmic. The chain is Cell division protein FtsB from Vibrio campbellii (strain ATCC BAA-1116).